The following is a 224-amino-acid chain: UPF0758 protein PM1152 (224 aa).

In terms of domain architecture, MPN spans 102–224 (AFKNSENVRF…YYSFAENRLL (123 aa)). H173, H175, and D186 together coordinate Zn(2+). Residues 173 to 186 (HNHPSGNPEPSASD) carry the JAMM motif motif.

This sequence belongs to the UPF0758 family.

This Pasteurella multocida (strain Pm70) protein is UPF0758 protein PM1152.